The chain runs to 396 residues: 1-deoxy-D-xylulose 5-phosphate reductoisomerase (396 aa).

Positions 13, 14, 15, 16, and 127 each coordinate NADPH. Lys-128 contributes to the 1-deoxy-D-xylulose 5-phosphate binding site. Glu-129 serves as a coordination point for NADPH. Asp-153 is a Mn(2+) binding site. 1-deoxy-D-xylulose 5-phosphate-binding residues include Ser-154, Glu-155, Ser-184, and His-207. Glu-155 serves as a coordination point for Mn(2+). Residue Gly-213 coordinates NADPH. The 1-deoxy-D-xylulose 5-phosphate site is built by Ser-220, Asn-225, Lys-226, and Glu-229. Position 229 (Glu-229) interacts with Mn(2+).

The protein belongs to the DXR family. It depends on Mg(2+) as a cofactor. The cofactor is Mn(2+).

The catalysed reaction is 2-C-methyl-D-erythritol 4-phosphate + NADP(+) = 1-deoxy-D-xylulose 5-phosphate + NADPH + H(+). It participates in isoprenoid biosynthesis; isopentenyl diphosphate biosynthesis via DXP pathway; isopentenyl diphosphate from 1-deoxy-D-xylulose 5-phosphate: step 1/6. Its function is as follows. Catalyzes the NADPH-dependent rearrangement and reduction of 1-deoxy-D-xylulose-5-phosphate (DXP) to 2-C-methyl-D-erythritol 4-phosphate (MEP). This Pseudomonas syringae pv. syringae (strain B728a) protein is 1-deoxy-D-xylulose 5-phosphate reductoisomerase.